The chain runs to 305 residues: Undecaprenyl-diphosphatase (305 aa).

A run of 8 helical transmembrane segments spans residues Gly18–Val38, Tyr55–Trp75, Trp103–Phe123, Pro130–Leu150, Gly187–Ile207, Phe225–Leu245, Phe246–Val266, and Leu284–Leu304.

Belongs to the UppP family.

It is found in the cell membrane. The catalysed reaction is di-trans,octa-cis-undecaprenyl diphosphate + H2O = di-trans,octa-cis-undecaprenyl phosphate + phosphate + H(+). In terms of biological role, catalyzes the dephosphorylation of undecaprenyl diphosphate (UPP). Confers resistance to bacitracin. This is Undecaprenyl-diphosphatase from Mycolicibacterium paratuberculosis (strain ATCC BAA-968 / K-10) (Mycobacterium paratuberculosis).